The primary structure comprises 302 residues: Acetyl-coenzyme A carboxylase carboxyl transferase subunit beta (302 aa).

Residues 25–294 (VWTKCDSCGQ…PQEDIVTEAA (270 aa)) form the CoA carboxyltransferase N-terminal domain. Cys-29, Cys-32, Cys-48, and Cys-51 together coordinate Zn(2+). The segment at 29–51 (CDSCGQVLYRAELERNLEVCPKC) adopts a C4-type zinc-finger fold.

The protein belongs to the AccD/PCCB family. As to quaternary structure, acetyl-CoA carboxylase is a heterohexamer composed of biotin carboxyl carrier protein (AccB), biotin carboxylase (AccC) and two subunits each of ACCase subunit alpha (AccA) and ACCase subunit beta (AccD). Requires Zn(2+) as cofactor.

The protein resides in the cytoplasm. The enzyme catalyses N(6)-carboxybiotinyl-L-lysyl-[protein] + acetyl-CoA = N(6)-biotinyl-L-lysyl-[protein] + malonyl-CoA. Its pathway is lipid metabolism; malonyl-CoA biosynthesis; malonyl-CoA from acetyl-CoA: step 1/1. Its function is as follows. Component of the acetyl coenzyme A carboxylase (ACC) complex. Biotin carboxylase (BC) catalyzes the carboxylation of biotin on its carrier protein (BCCP) and then the CO(2) group is transferred by the transcarboxylase to acetyl-CoA to form malonyl-CoA. The sequence is that of Acetyl-coenzyme A carboxylase carboxyl transferase subunit beta from Erwinia tasmaniensis (strain DSM 17950 / CFBP 7177 / CIP 109463 / NCPPB 4357 / Et1/99).